A 184-amino-acid polypeptide reads, in one-letter code: F(420)H(2) dehydrogenase subunit B (184 aa).

Residues 1–20 (MGEVKETKTNNSKENPEEEV) form a disordered region. [4Fe-4S] cluster contacts are provided by Cys61, Cys62, Cys126, and Cys156.

The protein belongs to the complex I 20 kDa subunit family. The FPO complex is composed of at least 13 different subunits. It depends on FAD as a cofactor. [4Fe-4S] cluster is required as a cofactor.

It is found in the cell inner membrane. The enzyme catalyses methanophenazine + reduced coenzyme F420-(gamma-L-Glu)(n) = dihydromethanophenazine + oxidized coenzyme F420-(gamma-L-Glu)(n) + H(+). Component of the F(420)H(2) dehydrogenase (FPO complex) which is part of the energy-conserving F(420)H(2):heterodisulfide oxidoreductase system. The membrane-bound electron transfer system of the complex plays an important role in the metabolism of methylotrophic methanogens when the organisms grow on methanol or methylamines. Catalyzes the oxidation of methanophenazine to dihydromethanophenazine. It shuttles electrons from F(420)H(2), via FAD and iron-sulfur (Fe-S) centers, to methanophenazine (an electron carrier in the membrane). It couples the redox reaction to proton translocation (for every two electrons transferred, two hydrogen ions are translocated across the cytoplasmic membrane), and thus conserves the redox energy in a proton gradient. It also catalyzes the oxidation of F(420)H(2) with quinones such as 2,3-dimethyl-1,4-naphthoquinone, 2-methyl-1,4-naphthoquinone and tetramethyl-p-benzoquinone. This is F(420)H(2) dehydrogenase subunit B (fpoB) from Methanosarcina mazei (strain ATCC BAA-159 / DSM 3647 / Goe1 / Go1 / JCM 11833 / OCM 88) (Methanosarcina frisia).